A 579-amino-acid polypeptide reads, in one-letter code: SLAIN motif-containing protein 1 (579 aa).

6 disordered regions span residues 1–21 (MMAE…GPGP), 60–95 (LLLQ…GPGA), 135–162 (GGGG…PPTL), 233–258 (YTSR…LEDD), 289–313 (STSA…TCSD), and 347–454 (IPHS…PGQI). Residues 9–21 (ASPVAASGAGPGP) show a composition bias toward low complexity. Residues 21–56 (PVVNAELEVKKLQELVRKLEKQNEQLRSRAASAAAA) are a coiled coil. Positions 63-73 (QPPPPSAPPPA) are enriched in pro residues. Over residues 141 to 154 (EPGTAGTPPGEAAT) the composition is skewed to low complexity. The segment covering 233–243 (YTSRGSPLSPQ) has biased composition (polar residues). Phosphoserine is present on Ser-241. 2 stretches are compositionally biased toward low complexity: residues 244 to 253 (SSIDSELSTS) and 289 to 305 (STSA…SLSS). The segment covering 362-373 (SPSTQYFPSNNF) has biased composition (polar residues). Low complexity predominate over residues 374–390 (QQPQYYPPQAQTADQQP). The span at 412 to 432 (AAASSNLSSPVTVRSSQSFDS) shows a compositional bias: polar residues. Arg-469 carries the post-translational modification Asymmetric dimethylarginine. A disordered region spans residues 479 to 516 (SPTVQGSSSSGSSGSSGGSGSGMPLSNGTQLYSTTGIP). The segment covering 502–516 (PLSNGTQLYSTTGIP) has biased composition (polar residues). The residue at position 554 (Arg-554) is an Asymmetric dimethylarginine.

This sequence belongs to the SLAIN motif-containing family. Interacts with MAPRE1, MAPRE2, MAPRE3 and CKAP5. Interacts with ZDHHC17 (via ANK repeats). In terms of tissue distribution, expressed in embryonic stem cells. Expressed in adult bone marrow, brain, kidney, lung, testis and thymus. Expressed in colon. Isoform 1 is highly expressed in brain. Isoform 2 is more widely expressed in bone marrow, brain, colon, kidney, lung and thymus.

The protein resides in the cytoplasm. Its subcellular location is the cytoskeleton. Its function is as follows. Microtubule plus-end tracking protein that might be involved in the regulation of cytoplasmic microtubule dynamics, microtubule organization and microtubule elongation. This chain is SLAIN motif-containing protein 1 (Slain1), found in Mus musculus (Mouse).